The primary structure comprises 125 residues: SOSS complex subunit C homolog B (125 aa).

Disordered stretches follow at residues 44–73 (PAPQ…RAAF) and 105–125 (PATP…NNPK).

Belongs to the SOSS-C family.

This is SOSS complex subunit C homolog B from Drosophila willistoni (Fruit fly).